Reading from the N-terminus, the 193-residue chain is Molybdenum cofactor guanylyltransferase (193 aa).

GTP-binding positions include L8–G10, K21, D67, and D98. D98 provides a ligand contact to Mg(2+).

This sequence belongs to the MobA family. In terms of assembly, monomer. It depends on Mg(2+) as a cofactor.

Its subcellular location is the cytoplasm. The catalysed reaction is Mo-molybdopterin + GTP + H(+) = Mo-molybdopterin guanine dinucleotide + diphosphate. Its function is as follows. Transfers a GMP moiety from GTP to Mo-molybdopterin (Mo-MPT) cofactor (Moco or molybdenum cofactor) to form Mo-molybdopterin guanine dinucleotide (Mo-MGD) cofactor. The sequence is that of Molybdenum cofactor guanylyltransferase from Cereibacter sphaeroides (strain ATCC 17023 / DSM 158 / JCM 6121 / CCUG 31486 / LMG 2827 / NBRC 12203 / NCIMB 8253 / ATH 2.4.1.) (Rhodobacter sphaeroides).